The following is a 249-amino-acid chain: tRNA pseudouridine synthase A (249 aa).

Catalysis depends on Asp53, which acts as the Nucleophile. Tyr111 provides a ligand contact to substrate.

This sequence belongs to the tRNA pseudouridine synthase TruA family. As to quaternary structure, homodimer.

It catalyses the reaction uridine(38/39/40) in tRNA = pseudouridine(38/39/40) in tRNA. Formation of pseudouridine at positions 38, 39 and 40 in the anticodon stem and loop of transfer RNAs. The chain is tRNA pseudouridine synthase A from Streptococcus sanguinis (strain SK36).